Consider the following 175-residue polypeptide: Regenerating islet-derived protein 3-alpha (175 aa).

A signal peptide spans 1-26 (MLPPMALPSVSWMLLSCLMLLSQVQG). Residues 27–37 (EEPQRELPSAR) constitute a propeptide that is removed on maturation. 3 disulfide bridges follow: C40–C51, C68–C171, and C146–C163. Residues 47-172 (YGSHCYALFL…CNVRLPYVCK (126 aa)) enclose the C-type lectin domain. Zn(2+)-binding residues include H50 and H107. A sufficient to activate EXTL3 region spans residues 103-118 (WIGLHDPTQGTEPNGE). An EPN motif is present at residues 114–116 (EPN). 2 residues coordinate Zn(2+): E121 and H145.

In terms of assembly, forms a hexameric membrane-permeabilizing oligomeric pore on membrane phospholipids. The hexamer is formed by three dimers related by helical symmetry. Forms filaments, filamentation traps pore complexes and limits damage to host cells. Interacts with EXTL3. Proteolytic processing by trypsin removes an inhibitory N-terminal propeptide and is essential for peptidoglycan binding and antibacterial activity. In terms of tissue distribution, expressed by keratinocytes. Highly expressed in epidermal keratinocytes of psoriasis patients (at protein level). Constitutively expressed in intestine. Low expression is found in healthy pancreas. Overexpressed during the acute phase of pancreatitis and in some patients with chronic pancreatitis.

The protein resides in the secreted. Lipopolysaccharide inhibits pore-forming activity, explaining why is bactericidal for Gram-positive but not Gram-negative bacteria. Bactericidal C-type lectin which acts exclusively against Gram-positive bacteria and mediates bacterial killing by binding to surface-exposed carbohydrate moieties of peptidoglycan. Binds membrane phospholipids and kills bacteria by forming a hexameric membrane-permeabilizing oligomeric pore. Its function is as follows. Acts as a hormone in response to different stimuli like anti-inflammatory signals, such as IL17A, or gut microbiome. Secreted by different cell types to activate its receptor EXTL3 and induce cell specific signaling pathways. Induced by IL17A in keratinocytes, regulates keratinocyte proliferation and differentiation after skin injury via activation of EXTL3-PI3K-AKT signaling pathway. In parallel, inhibits skin inflammation through the inhibition of inflammatory cytokines such as IL6 and TNF. In pancreas, is able to permealize beta-cells membrane and stimulate their proliferation. Functionally, has bacteriostatic activity. This is Regenerating islet-derived protein 3-alpha from Homo sapiens (Human).